The primary structure comprises 105 residues: Translation initiation factor 1A (105 aa).

The S1-like domain occupies 12-87 (TRVRTPREEN…QKCDIIWRYT (76 aa)).

Belongs to the eIF-1A family.

In terms of biological role, seems to be required for maximal rate of protein biosynthesis. Enhances ribosome dissociation into subunits and stabilizes the binding of the initiator Met-tRNA(I) to 40 S ribosomal subunits. The polypeptide is Translation initiation factor 1A (eIF1A) (Methanococcus aeolicus (strain ATCC BAA-1280 / DSM 17508 / OCM 812 / Nankai-3)).